Here is a 226-residue protein sequence, read N- to C-terminus: Small ribosomal subunit protein uS5 (226 aa).

Over residues M1–P18 the composition is skewed to polar residues. Positions M1–R45 are disordered. The span at E20–R45 shows a compositional bias: basic and acidic residues. The S5 DRBM domain maps to F48 to V111.

The protein belongs to the universal ribosomal protein uS5 family. As to quaternary structure, part of the 30S ribosomal subunit. Contacts proteins S4 and S8.

In terms of biological role, with S4 and S12 plays an important role in translational accuracy. Functionally, located at the back of the 30S subunit body where it stabilizes the conformation of the head with respect to the body. The sequence is that of Small ribosomal subunit protein uS5 from Beutenbergia cavernae (strain ATCC BAA-8 / DSM 12333 / CCUG 43141 / JCM 11478 / NBRC 16432 / NCIMB 13614 / HKI 0122).